The chain runs to 174 residues: Guided entry of tail-anchored proteins factor 1 (174 aa).

Over Met-1–Arg-8 the chain is Lumenal. A helical transmembrane segment spans residues Trp-9–Pro-29. Residues Ser-30–Lys-99 are Cytoplasmic-facing. The stretch at Leu-39–Thr-94 forms a coiled coil. The interval Leu-39–Leu-97 is interaction with GET3/TRC40. A helical transmembrane segment spans residues Ile-100 to Ile-120. At Trp-121–Arg-148 the chain is on the lumenal side. A helical transmembrane segment spans residues Val-149–Val-169. Residues Leu-170–Ser-174 are Cytoplasmic-facing.

It belongs to the WRB/GET1 family. As to quaternary structure, component of the Golgi to ER traffic (GET) complex, which is composed of GET1/WRB, CAMLG/GET2 and GET3. Within the complex, GET1 and CAMLG form a heterotetramer which is stabilized by phosphatidylinositol binding and which binds to the GET3 homodimer. Interacts with CAMLG (via C-terminus). GET3 shows a higher affinity for CAMLG than for GET1.

It is found in the endoplasmic reticulum membrane. Required for the post-translational delivery of tail-anchored (TA) proteins to the endoplasmic reticulum. Together with CAMLG/GET2, acts as a membrane receptor for soluble GET3/TRC40, which recognizes and selectively binds the transmembrane domain of TA proteins in the cytosol. Required to ensure correct topology and ER insertion of CAMLG. This Bos taurus (Bovine) protein is Guided entry of tail-anchored proteins factor 1.